Consider the following 304-residue polypeptide: Quorum-quenching protein AidA (304 aa).

The protein belongs to the AB hydrolase superfamily.

Its function is as follows. Involved in quorum quenching (QQ). Inhibits motility and biofilm formation. Could contribute in bacterial competition, as it is capable of hydrolyzing the signaling molecules that mediate interspecies communication. The sequence is that of Quorum-quenching protein AidA from Acinetobacter baumannii (strain MDR-ZJ06).